Consider the following 405-residue polypeptide: uncharacterized protein (405 aa).

Transmembrane regions (helical) follow at residues isoleucine 19 to valine 39, valine 47 to leucine 67, isoleucine 85 to leucine 105, alanine 107 to glycine 127, glycine 156 to tryptophan 176, glycine 178 to isoleucine 198, glycine 224 to phenylalanine 244, glycine 252 to proline 272, valine 283 to methionine 303, isoleucine 309 to alanine 329, threonine 344 to methionine 364, and tryptophan 366 to leucine 386.

Belongs to the major facilitator superfamily. YhhS family.

The protein resides in the cell inner membrane. This is an uncharacterized protein from Escherichia coli O6:H1 (strain CFT073 / ATCC 700928 / UPEC).